Here is a 100-residue protein sequence, read N- to C-terminus: MISLNHYLLLCVILFCIGLFGILRRSNILMLFFSTEILLNAINIGFVAIGSYLNDLNGEIFALFIIAIAASEIAVGLGLVVIWYKKHRTLDITTLQNLKG.

3 consecutive transmembrane segments (helical) span residues 2-22 (ISLNHYLLLCVILFCIGLFGI), 28-48 (ILMLFFSTEILLNAINIGFVA), and 63-83 (LFIIAIAASEIAVGLGLVVIW).

This sequence belongs to the complex I subunit 4L family. As to quaternary structure, NDH-1 is composed of 14 different subunits. Subunits NuoA, H, J, K, L, M, N constitute the membrane sector of the complex.

It is found in the cell inner membrane. The enzyme catalyses a quinone + NADH + 5 H(+)(in) = a quinol + NAD(+) + 4 H(+)(out). In terms of biological role, NDH-1 shuttles electrons from NADH, via FMN and iron-sulfur (Fe-S) centers, to quinones in the respiratory chain. The immediate electron acceptor for the enzyme in this species is believed to be ubiquinone. Couples the redox reaction to proton translocation (for every two electrons transferred, four hydrogen ions are translocated across the cytoplasmic membrane), and thus conserves the redox energy in a proton gradient. The sequence is that of NADH-quinone oxidoreductase subunit K from Helicobacter hepaticus (strain ATCC 51449 / 3B1).